The chain runs to 148 residues: Cytochrome c oxidase subunit 4, mitochondrial (148 aa).

The transit peptide at 1-24 (MFALRSIRSATKAFQTTSIVSQRG) directs the protein to the mitochondrion.

As to quaternary structure, slime mold cytochrome c oxidase consists of at least seven different polypeptides species, subunits I, II, III, IV, V, VI, and VIIe/s in order of MW.

It is found in the mitochondrion inner membrane. It catalyses the reaction 4 Fe(II)-[cytochrome c] + O2 + 8 H(+)(in) = 4 Fe(III)-[cytochrome c] + 2 H2O + 4 H(+)(out). In terms of biological role, this protein is one of the nuclear-coded polypeptide chains of cytochrome c oxidase, the terminal oxidase in mitochondrial electron transport. The protein is Cytochrome c oxidase subunit 4, mitochondrial (cxdA) of Dictyostelium discoideum (Social amoeba).